We begin with the raw amino-acid sequence, 62 residues long: Protein A37.5 homolog (62 aa).

Belongs to the orthopoxviruses A37.5 protein family.

The sequence is that of Protein A37.5 homolog (A40_5R) from Homo sapiens (Human).